Here is a 195-residue protein sequence, read N- to C-terminus: Protein GrpE (195 aa).

It belongs to the GrpE family. As to quaternary structure, homodimer.

Its subcellular location is the cytoplasm. Participates actively in the response to hyperosmotic and heat shock by preventing the aggregation of stress-denatured proteins, in association with DnaK and GrpE. It is the nucleotide exchange factor for DnaK and may function as a thermosensor. Unfolded proteins bind initially to DnaJ; upon interaction with the DnaJ-bound protein, DnaK hydrolyzes its bound ATP, resulting in the formation of a stable complex. GrpE releases ADP from DnaK; ATP binding to DnaK triggers the release of the substrate protein, thus completing the reaction cycle. Several rounds of ATP-dependent interactions between DnaJ, DnaK and GrpE are required for fully efficient folding. In Francisella tularensis subsp. tularensis (strain FSC 198), this protein is Protein GrpE.